The chain runs to 641 residues: MTVNARGPEGRTDGAVPEGAGGMKKLAGISLAALGVVFGDIGTSPLYAIRECFHGDYGIAASNANILGVLSLLFWALILIVSLKYLTFIMRADNEGEGGILALTALIIGQSIKKKKDRWVLVSIGLFGASVLLGEAMITPAISVLSATEGLQIIAPAFADMVIPATVVILAGLFLFQHNGTARLGALFGPIILLWFFCLGTLGIIQIIQYPQILEAVMPWYGINFLLNNQLHGFLVLGAVFLAVTGAEALYADMGHFGRRPIRLTWVLFVLPALLLNYFGQGAFLLASPEASSHPFYALVPSWAMIPMVLLATVATVIASQALITGVYSITQQAMQLGYLPRLTVTHTSASHIGQIYVPAANWALMAATIGLVLGFGSSSRLAAAYGASMTTTMLISTILFFFVARDLWKWRPPVLWALVSLFAVVDLSFFGASMSKLFHGAWFPLAVGLLMFTLMNTWKQGRRLLMRQLQDRTLTVDGFLDSLALQEPQRVPGQAVYLTANPDIVPIALLHNLRHNKVLHSEVALFHFSSERVPRVPNSKKVEFVRLKDGFTQVVARYGFLEYPNIRQVLELANALGLNFKPEAISFFLSREKIVADEKTKILPSRKKMFALMARNALSATAYYGLPSGQVIEIGVQVQI.

Transmembrane regions (helical) follow at residues 29 to 49 (ISLA…LYAI), 66 to 86 (ILGV…LKYL), 119 to 139 (WVLV…AMIT), 156 to 176 (PAFA…LFLF), 185 to 205 (GALF…LGII), 231 to 251 (LHGF…EALY), 266 to 286 (WVLF…AFLL), 298 to 318 (ALVP…ATVI), 356 to 376 (IYVP…VLGF), 384 to 404 (AAYG…FFFV), 415 to 435 (VLWA…GASM), and 438 to 458 (LFHG…LMNT).

The protein belongs to the HAK/KUP transporter (TC 2.A.72) family.

Its subcellular location is the cell inner membrane. The enzyme catalyses K(+)(in) + H(+)(in) = K(+)(out) + H(+)(out). Transport of potassium into the cell. Likely operates as a K(+):H(+) symporter. The polypeptide is Probable potassium transport system protein Kup (Chlorobium phaeovibrioides (strain DSM 265 / 1930) (Prosthecochloris vibrioformis (strain DSM 265))).